The sequence spans 469 residues: A-type ATP synthase subunit B 3 (469 aa).

This sequence belongs to the ATPase alpha/beta chains family. Has multiple subunits with at least A(3), B(3), C, D, E, F, H, I and proteolipid K(x).

It is found in the cell membrane. Its function is as follows. Component of the A-type ATP synthase that produces ATP from ADP in the presence of a proton gradient across the membrane. The B chain is a regulatory subunit. The polypeptide is A-type ATP synthase subunit B 3 (Methanospirillum hungatei JF-1 (strain ATCC 27890 / DSM 864 / NBRC 100397 / JF-1)).